A 126-amino-acid chain; its full sequence is Fluoride-specific ion channel FluC (126 aa).

The next 3 membrane-spanning stretches (helical) occupy residues 35–55 (WWTLSVNIVGSLAMGLLIGLL), 71–91 (VGMLGGFTTFSSFSMEFWLLF), and 101–121 (LYVVASVVGALLACGAGMILI). 2 residues coordinate Na(+): glycine 75 and threonine 78.

This sequence belongs to the fluoride channel Fluc/FEX (TC 1.A.43) family.

The protein localises to the cell inner membrane. It carries out the reaction fluoride(in) = fluoride(out). Na(+) is not transported, but it plays an essential structural role and its presence is essential for fluoride channel function. Its function is as follows. Fluoride-specific ion channel. Important for reducing fluoride concentration in the cell, thus reducing its toxicity. This is Fluoride-specific ion channel FluC from Sphingopyxis alaskensis (strain DSM 13593 / LMG 18877 / RB2256) (Sphingomonas alaskensis).